The following is a 384-amino-acid chain: DNA dC-&gt;dU-editing enzyme APOBEC-3G (384 aa).

The segment at 1–60 is essential for cytoplasmic localization; the sequence is MKPHFRNTVERMYRDTFSYNFYNRPILSRRNTVWLCYEVKTKGPSRPPLDAKIFRGQVYS. A CMP/dCMP-type deaminase 1 domain is found at 29 to 138; that stretch reads RRNTVWLCYE…PDYQEALRSL (110 aa). Position 32 is a phosphothreonine; by PKA (Thr32). Residues Lys42, Lys52, and Lys63 each participate in a (Microbial infection) Glycyl lysine isopeptide (Lys-Gly) (interchain with G-Cter in ubiquitin) cross-link. Zn(2+) contacts are provided by His65, Cys97, and Cys100. Residues Lys150 and Lys163 each participate in a (Microbial infection) Glycyl lysine isopeptide (Lys-Gly) (interchain with G-Cter in ubiquitin) cross-link. The necessary for homooligomerization stretch occupies residues 209 to 336; that stretch reads EPWVRGRHET…TLAEAGAKIS (128 aa). The segment at 213 to 215 is interaction with DNA; the sequence is RGR. A CMP/dCMP-type deaminase 2 domain is found at 214–328; sequence GRHETYLCYE…GRCQEGLRTL (115 aa). The residue at position 218 (Thr218) is a Phosphothreonine; by PKA and CAMK2. Lys249 is covalently cross-linked ((Microbial infection) Glycyl lysine isopeptide (Lys-Gly) (interchain with G-Cter in ubiquitin)). Zn(2+) is bound at residue His257. The Proton donor role is filled by Glu259. Residue Lys270 forms a (Microbial infection) Glycyl lysine isopeptide (Lys-Gly) (interchain with G-Cter in ubiquitin) linkage. Residues Cys288 and Cys291 each contribute to the Zn(2+) site. Residues Lys297, Lys301, and Lys303 each participate in a (Microbial infection) Glycyl lysine isopeptide (Lys-Gly) (interchain with G-Cter in ubiquitin) cross-link. Residues 313–320 form an interaction with DNA region; it reads RIYDDQGR. A (Microbial infection) Glycyl lysine isopeptide (Lys-Gly) (interchain with G-Cter in ubiquitin) cross-link involves residue Lys334.

This sequence belongs to the cytidine and deoxycytidylate deaminase family. In terms of assembly, homodimer. Homooligomer. Can bind RNA to form ribonucleoprotein complexes of high-molecular-mass (HMM) or low-molecular-mass (LMM). HMM is inactive and heterogeneous in protein composition because of binding nonselectively to cellular RNAs, which in turn are associated with variety of cellular proteins. The LMM form which is enzymatically active has few or no RNAs associated. Its ability to form homooligomer is distinct from its ability to assemble into HMM. Interacts with APOBEC3B, APOBEC3F, MOV10, AGO2, EIF4E, EIF4ENIF1, DCP2 and DDX6 in an RNA-dependent manner. Interacts with AGO1, AGO3 and PKA/PRKACA. (Microbial infection) Interacts with HIV-1 Vif; promoting its ubiquitination by a cullin-5-RING E3 ubiquitin-protein ligase complex (ECS complex) hijacked by the HIV-1 Vif. As to quaternary structure, (Microbial infection) Interacts with HIV-1 reverse transcriptase/ribonuclease H. In terms of assembly, (Microbial infection) Interacts with hepatitis B virus capsid protein. Zn(2+) is required as a cofactor. Post-translationally, (Microbial infection) Following infection by HIV-1, ubiquitinated by a cullin-5-RING E3 ubiquitin-protein ligase complex (ECS complex) hijacked by the HIV-1 Vif protein, leading to its degradation. Deubiquitinated by USP49; leading to stabilization. Phosphorylation at Thr-32 reduces its binding to HIV-1 Vif and subsequent ubiquitination and degradation thus promoting its antiviral activity. As to expression, expressed in spleen, testes, ovary and peripheral blood leukocytes and CD4+ lymphocytes. Also expressed in non-permissive peripheral blood mononuclear cells, and several tumor cell lines; no expression detected in permissive lymphoid and non-lymphoid cell lines. Exists only in the LMM form in peripheral blood-derived resting CD4 T-cells and monocytes, both of which are refractory to HIV-1 infection. LMM is converted to a HMM complex when resting CD4 T-cells are activated or when monocytes are induced to differentiate into macrophages. This change correlates with increased susceptibility of these cells to HIV-1 infection.

The protein resides in the cytoplasm. It localises to the nucleus. The protein localises to the P-body. The enzyme catalyses a 2'-deoxycytidine in single-stranded DNA + H2O + H(+) = a 2'-deoxyuridine in single-stranded DNA + NH4(+). With respect to regulation, (Microbial infection) Antiviral activity is neutralized by the HIV-1 virion infectivity factor (Vif), that prevents its incorporation into progeny virions by both inhibiting its translation and/or by inducing its ubiquitination and subsequent degradation by the 26S proteasome. Can also be neutralized by simian immunodeficiency virus sooty mangabey monkey virus (SIV-sm) and chimpanzee immunodeficiency virus (SIV-cpz) Vif. Functionally, DNA deaminase (cytidine deaminase) which acts as an inhibitor of retrovirus replication and retrotransposon mobility via deaminase-dependent and -independent mechanisms. Exhibits potent antiviral activity against Vif-deficient HIV-1. After the penetration of retroviral nucleocapsids into target cells of infection and the initiation of reverse transcription, it can induce the conversion of cytosine to uracil in the minus-sense single-strand viral DNA, leading to G-to-A hypermutations in the subsequent plus-strand viral DNA. The resultant detrimental levels of mutations in the proviral genome, along with a deamination-independent mechanism that works prior to the proviral integration, together exert efficient antiretroviral effects in infected target cells. Selectively targets single-stranded DNA and does not deaminate double-stranded DNA or single- or double-stranded RNA. Exhibits antiviral activity also against simian immunodeficiency viruses (SIVs), hepatitis B virus (HBV), equine infectious anemia virus (EIAV), xenotropic MuLV-related virus (XMRV) and simian foamy virus (SFV). May inhibit the mobility of LTR and non-LTR retrotransposons. This is DNA dC-&gt;dU-editing enzyme APOBEC-3G from Homo sapiens (Human).